A 341-amino-acid polypeptide reads, in one-letter code: DNA-directed RNA polymerase subunit alpha (341 aa).

The interval 1–233 (MIQDEVPVSA…DLFLPFLHTE (233 aa)) is alpha N-terminal domain (alpha-NTD). The segment at 262 to 341 (DRMAKEVAFK…NLPRNKFSID (80 aa)) is alpha C-terminal domain (alpha-CTD).

The protein belongs to the RNA polymerase alpha chain family. In terms of assembly, in plastids the minimal PEP RNA polymerase catalytic core is composed of four subunits: alpha, beta, beta', and beta''. When a (nuclear-encoded) sigma factor is associated with the core the holoenzyme is formed, which can initiate transcription.

The protein localises to the plastid. It localises to the chloroplast. It catalyses the reaction RNA(n) + a ribonucleoside 5'-triphosphate = RNA(n+1) + diphosphate. Functionally, DNA-dependent RNA polymerase catalyzes the transcription of DNA into RNA using the four ribonucleoside triphosphates as substrates. This Angiopteris evecta (Mule's foot fern) protein is DNA-directed RNA polymerase subunit alpha.